The primary structure comprises 268 residues: Large ribosomal subunit protein uL3 (268 aa).

Q156 is subject to N5-methylglutamine. The segment covering 242 to 259 (VENEAAPADADNAAPEAA) has biased composition (low complexity). A disordered region spans residues 242–268 (VENEAAPADADNAAPEAAADGEEGTQA).

Belongs to the universal ribosomal protein uL3 family. In terms of assembly, part of the 50S ribosomal subunit. Forms a cluster with proteins L14 and L19. Methylated by PrmB.

Functionally, one of the primary rRNA binding proteins, it binds directly near the 3'-end of the 23S rRNA, where it nucleates assembly of the 50S subunit. In Maricaulis maris (strain MCS10) (Caulobacter maris), this protein is Large ribosomal subunit protein uL3.